Consider the following 139-residue polypeptide: Protein COLD-REGULATED 15A, chloroplastic (139 aa).

Residues 1-40 (MAMSFSGAVLTGMASSFHSGAKQSSFGAVRVGQKTQFVVV) constitute a chloroplast transit peptide.

Belongs to the COR15 protein family. Forms homooligomers which interact with potential stromal substrates in the stroma of chloroplasts. Interacts with the galactose headgroup of the chloroplast lipid monogalactosyldiacylglycerol (MGDG).

Its subcellular location is the plastid. It localises to the chloroplast stroma. Its function is as follows. Exhibits cryoprotective activity toward stromal substrates (e.g. LDH and rubisco) in chloroplasts and in protoplasts and confers freezing tolerance to plants in a CBF-dependent manner. Protectant against various stresses (e.g. cold, drought and heat stress) by preventing protein aggregation (e.g. LDH) and attenuating enzyme inactivation. Influences the intrinsic curvature of the inner membrane of the chloroplast envelope, and modulates the freeze-induced lamellar-to-hexagonal II phase transitions that occur in regions where the plasma membrane is brought into close apposition with the chloroplast envelope during freeze-induced osmotic contraction. Mediates a shift in the melting curves of phospholipids-containing membranes to lower temperatures. Involved in the regulation of leaf senescence by abscisic acid (ABA) in a VNI2-dependent manner. This is Protein COLD-REGULATED 15A, chloroplastic from Arabidopsis thaliana (Mouse-ear cress).